A 668-amino-acid polypeptide reads, in one-letter code: MVADASQQGQSNGAAFNQQQQYQQQQQRQLFGGEEEFGDEEELGDDVDLVVGDYSAAFAGEAGAEVDEAQAAALAAAHAQAQQQAQAAALAAVPDQIRKYVVLFNQAVQINNVQDISNAYEGTWNRLTDKFYARSEWPEAETIAPLVNDDQKFLTLYRELWYRHVYSRLSPDGEDRFHSYDNYCDFFNFVLNSDGPVQLELPAQWLWDIIDEFIYQFQSFSQWRNKVSNKSEDEIALLQDGGVWSSYSVLNVLYSLIQKSRITEQLVAASKGEDPDEVAGEFGSKPLYRMLGYFSIIGLLRVHVLLGDYTLALKMLDHIELNKKSGLINRVTACHVTAYYYVGFAYLMLRRYPDCIKSFTHILVFIMRLRQYHTRSYQYDQINKTADRMYALLSMACALCPTRLDENIQTQMRDKYGDQFSKMTRPGAEGLAAFEELFIYACPKFITANSPAYHDEEALVEYKQKAVFPDPTQHQLRVFLSDVKTQLSNANVRSFLRLYTTLGTDKLASFLEIDEEELVEMMMVMKNSTRSLKWSSGSLLHGQVVNTSDLDFVIDTDMVHIAESRVGRRYGDWFLRNGTRMHDVLNNIQAKPLPIVSKQVQDEAAAAAAEAKDAKDKKVKNAWAAGVKAGPPAFSQRSGGAGRSSVNKSAPAPAGAWGSSKPQPSVTA.

Residues 1–17 are compositionally biased toward polar residues; it reads MVADASQQGQSNGAAFN. A disordered region spans residues 1–42; it reads MVADASQQGQSNGAAFNQQQQYQQQQQRQLFGGEEEFGDEEE. The span at 18 to 32 shows a compositional bias: low complexity; that stretch reads QQQQYQQQQQRQLFG. Positions 33-42 are enriched in acidic residues; that stretch reads GEEEFGDEEE. A PCI domain is found at 358-552; it reads SFTHILVFIM…QVVNTSDLDF (195 aa). The interval 625–668 is disordered; it reads AGVKAGPPAFSQRSGGAGRSSVNKSAPAPAGAWGSSKPQPSVTA. The span at 648-662 shows a compositional bias: low complexity; sequence KSAPAPAGAWGSSKP.

The protein belongs to the eIF-3 subunit L family. As to quaternary structure, component of the eukaryotic translation initiation factor 3 (eIF-3) complex.

It localises to the cytoplasm. In terms of biological role, component of the eukaryotic translation initiation factor 3 (eIF-3) complex, which is involved in protein synthesis of a specialized repertoire of mRNAs and, together with other initiation factors, stimulates binding of mRNA and methionyl-tRNAi to the 40S ribosome. The eIF-3 complex specifically targets and initiates translation of a subset of mRNAs involved in cell proliferation. The chain is Eukaryotic translation initiation factor 3 subunit L from Mycosarcoma maydis (Corn smut fungus).